Consider the following 210-residue polypeptide: dITP/XTP pyrophosphatase (210 aa).

Substrate is bound at residue 16-21; the sequence is SNNKGK. Residue D79 is the Proton acceptor of the active site. D79 provides a ligand contact to Mg(2+). Residues S80, 166 to 169, K189, and 194 to 195 contribute to the substrate site; these read FGYD and HR.

This sequence belongs to the HAM1 NTPase family. In terms of assembly, homodimer. Mg(2+) serves as cofactor.

It carries out the reaction XTP + H2O = XMP + diphosphate + H(+). It catalyses the reaction dITP + H2O = dIMP + diphosphate + H(+). The catalysed reaction is ITP + H2O = IMP + diphosphate + H(+). Pyrophosphatase that catalyzes the hydrolysis of nucleoside triphosphates to their monophosphate derivatives, with a high preference for the non-canonical purine nucleotides XTP (xanthosine triphosphate), dITP (deoxyinosine triphosphate) and ITP. Seems to function as a house-cleaning enzyme that removes non-canonical purine nucleotides from the nucleotide pool, thus preventing their incorporation into DNA/RNA and avoiding chromosomal lesions. This Acinetobacter baylyi (strain ATCC 33305 / BD413 / ADP1) protein is dITP/XTP pyrophosphatase.